The primary structure comprises 500 residues: NAD(P)H-quinone oxidoreductase chain 4, chloroplastic (500 aa).

Transmembrane regions (helical) follow at residues 4-24 (FPWLTIIVIFPISAGSLMLFL), 35-55 (YTICICILELLLTTYAFCYNF), 87-107 (IGTILLTGFITTLATLAAFPV), 113-130 (LFHFLMLAMYSGQIGSFS), 134-154 (LLLFFIMWELELIPVYLLLAM), 167-187 (FILYTAGSSIFLLIGVLGLSL), 211-231 (ILFYIGFLIAFAVKLPIIPLH), 242-262 (HYSTCMLLAGILLKMGAYGLV), 272-292 (AHSMFSPWLLVVGTIQIIYAA), 305-325 (IAYSSVSHMGFIIIGISSITD), 330-350 (GAILQIISHGFIGAALFFLAG), 386-406 (LALPGMSGFVAELIVFFGIIT), 416-436 (ILIIFVMAIGMILTPIYLLSM), and 462-482 (LFLSISILLPIIGIGIYPDFV).

Belongs to the complex I subunit 4 family.

Its subcellular location is the plastid. The protein localises to the chloroplast thylakoid membrane. It carries out the reaction a plastoquinone + NADH + (n+1) H(+)(in) = a plastoquinol + NAD(+) + n H(+)(out). It catalyses the reaction a plastoquinone + NADPH + (n+1) H(+)(in) = a plastoquinol + NADP(+) + n H(+)(out). This Lepidium virginicum (Virginia pepperweed) protein is NAD(P)H-quinone oxidoreductase chain 4, chloroplastic.